We begin with the raw amino-acid sequence, 189 residues long: Xanthine phosphoribosyltransferase (189 aa).

Residues Leu20 and Asn27 each contribute to the xanthine site. 128–132 is a 5-phospho-alpha-D-ribose 1-diphosphate binding site; that stretch reads ANGEA. Lys156 provides a ligand contact to xanthine.

The protein belongs to the purine/pyrimidine phosphoribosyltransferase family. Xpt subfamily. Homodimer.

The protein localises to the cytoplasm. It catalyses the reaction XMP + diphosphate = xanthine + 5-phospho-alpha-D-ribose 1-diphosphate. It functions in the pathway purine metabolism; XMP biosynthesis via salvage pathway; XMP from xanthine: step 1/1. Functionally, converts the preformed base xanthine, a product of nucleic acid breakdown, to xanthosine 5'-monophosphate (XMP), so it can be reused for RNA or DNA synthesis. This chain is Xanthine phosphoribosyltransferase, found in Clostridium acetobutylicum (strain ATCC 824 / DSM 792 / JCM 1419 / IAM 19013 / LMG 5710 / NBRC 13948 / NRRL B-527 / VKM B-1787 / 2291 / W).